The sequence spans 131 residues: Sec-independent protein translocase protein TatB (131 aa).

A helical membrane pass occupies residues 1–21 (MFDISFAELVVVGIVALIVIG). Polar residues-rich tracts occupy residues 71-93 (NSFE…TQSA) and 111-131 (PVNT…QPNS). Residues 71–131 (NSFENSVRSE…APAEPRQPNS (61 aa)) are disordered.

Belongs to the TatB family. The Tat system comprises two distinct complexes: a TatABC complex, containing multiple copies of TatA, TatB and TatC subunits, and a separate TatA complex, containing only TatA subunits. Substrates initially bind to the TatABC complex, which probably triggers association of the separate TatA complex to form the active translocon.

It is found in the cell inner membrane. Functionally, part of the twin-arginine translocation (Tat) system that transports large folded proteins containing a characteristic twin-arginine motif in their signal peptide across membranes. Together with TatC, TatB is part of a receptor directly interacting with Tat signal peptides. TatB may form an oligomeric binding site that transiently accommodates folded Tat precursor proteins before their translocation. This chain is Sec-independent protein translocase protein TatB, found in Nitrosomonas europaea (strain ATCC 19718 / CIP 103999 / KCTC 2705 / NBRC 14298).